The following is a 338-amino-acid chain: ABC transporter I family member 6, chloroplastic (338 aa).

The transit peptide at 1 to 66 (MAGVNLQLRH…RTTRRSVIVS (66 aa)) directs the protein to the chloroplast. The ABC transporter domain maps to 92-338 (LEVRDLRAVI…EKEGYKAISG (247 aa)). 126–133 (GKNGSGKS) contacts ATP.

It belongs to the ABC transporter superfamily. ABCI family. In terms of assembly, interacts with NAP6. Present in all organs, with higher levels in aerial parts.

The protein localises to the plastid. It is found in the chloroplast. Functionally, essential protein. Required during embryo development, especially at early stages. Involved in chloroplast differentiation. This Arabidopsis thaliana (Mouse-ear cress) protein is ABC transporter I family member 6, chloroplastic (ABCI6).